Reading from the N-terminus, the 180-residue chain is Large ribosomal subunit protein uL5 (180 aa).

The protein belongs to the universal ribosomal protein uL5 family. As to quaternary structure, part of the 50S ribosomal subunit; part of the 5S rRNA/L5/L18/L25 subcomplex. Contacts the 5S rRNA and the P site tRNA. Forms a bridge to the 30S subunit in the 70S ribosome.

Functionally, this is one of the proteins that bind and probably mediate the attachment of the 5S RNA into the large ribosomal subunit, where it forms part of the central protuberance. In the 70S ribosome it contacts protein S13 of the 30S subunit (bridge B1b), connecting the 2 subunits; this bridge is implicated in subunit movement. Contacts the P site tRNA; the 5S rRNA and some of its associated proteins might help stabilize positioning of ribosome-bound tRNAs. The polypeptide is Large ribosomal subunit protein uL5 (Spiroplasma kunkelii).